Reading from the N-terminus, the 258-residue chain is Hydroxypyruvate isomerase (258 aa).

Catalysis depends on proton donor/acceptor residues E143 and E240.

Belongs to the hyi family. In terms of assembly, homodimer.

It catalyses the reaction 3-hydroxypyruvate = 2-hydroxy-3-oxopropanoate. Its activity is regulated as follows. Not stimulated by addition of pyridoxal 5'-phosphate (0.1 mM), FAD, NAD(+), NADP(+) or ATP (1 mM each). EDTA (10 mM) and metal ions (1 mM) such as Ca(2+), Co(2+), Mg(2+), Ni(2+), Zn(2+) do not affect the enzyme activity. In terms of biological role, catalyzes the reversible isomerization between hydroxypyruvate and 2-hydroxy-3-oxopropanoate (also termed tartronate semialdehyde). Does not catalyze the isomerization of D-fructose to D-glucose or that of D-xylulose to D-xylose. Also does not catalyze racemization of serine, alanine, glycerate or lactate. The protein is Hydroxypyruvate isomerase (hyi) of Escherichia coli (strain K12).